The chain runs to 151 residues: Flagellar assembly factor FliW (151 aa).

This sequence belongs to the FliW family. Interacts with translational regulator CsrA and flagellin(s).

The protein resides in the cytoplasm. In terms of biological role, acts as an anti-CsrA protein, binds CsrA and prevents it from repressing translation of its target genes, one of which is flagellin. Binds to flagellin and participates in the assembly of the flagellum. The chain is Flagellar assembly factor FliW from Halalkalibacterium halodurans (strain ATCC BAA-125 / DSM 18197 / FERM 7344 / JCM 9153 / C-125) (Bacillus halodurans).